Here is a 443-residue protein sequence, read N- to C-terminus: ATP-dependent protease ATPase subunit HslU (443 aa).

Residues Ile-18 and 60–65 (GVGKTE) contribute to the ATP site. The disordered stretch occupies residues 138–158 (PAENQWGEKEQNEDKGTRQTF). Over residues 143 to 154 (WGEKEQNEDKGT) the composition is skewed to basic and acidic residues. ATP contacts are provided by Asp-255, Glu-321, and Arg-393.

It belongs to the ClpX chaperone family. HslU subfamily. In terms of assembly, a double ring-shaped homohexamer of HslV is capped on each side by a ring-shaped HslU homohexamer. The assembly of the HslU/HslV complex is dependent on binding of ATP.

It localises to the cytoplasm. ATPase subunit of a proteasome-like degradation complex; this subunit has chaperone activity. The binding of ATP and its subsequent hydrolysis by HslU are essential for unfolding of protein substrates subsequently hydrolyzed by HslV. HslU recognizes the N-terminal part of its protein substrates and unfolds these before they are guided to HslV for hydrolysis. The chain is ATP-dependent protease ATPase subunit HslU from Pseudoalteromonas atlantica (strain T6c / ATCC BAA-1087).